The chain runs to 102 residues: Large ribosomal subunit protein uL23c (102 aa).

The protein belongs to the universal ribosomal protein uL23 family. Part of the 50S ribosomal subunit.

The protein resides in the plastid. Its subcellular location is the chloroplast. Binds to 23S rRNA. The chain is Large ribosomal subunit protein uL23c (rpl23) from Trieres chinensis (Marine centric diatom).